Reading from the N-terminus, the 510-residue chain is Catalase (510 aa).

Residues 1-26 (MPLLNWSRHMVCLTAAGLITVPTVYA) form the signal peptide. Active-site residues include histidine 78 and asparagine 150. Residue tyrosine 358 coordinates heme. The segment covering 386–400 (NQDGALNTGHTTSGV) has biased composition (polar residues). A disordered region spans residues 386–412 (NQDGALNTGHTTSGVNYEPSRLEPRPA).

Belongs to the catalase family. The cofactor is heme.

Its subcellular location is the periplasm. It carries out the reaction 2 H2O2 = O2 + 2 H2O. Decomposes hydrogen peroxide into water and oxygen; serves to protect cells from the toxic effects of hydrogen peroxide. In Pseudomonas syringae pv. syringae, this protein is Catalase (katB).